A 101-amino-acid polypeptide reads, in one-letter code: Protein translation factor SUI1 homolog (101 aa).

The protein belongs to the SUI1 family.

This Aeropyrum pernix (strain ATCC 700893 / DSM 11879 / JCM 9820 / NBRC 100138 / K1) protein is Protein translation factor SUI1 homolog.